A 1052-amino-acid polypeptide reads, in one-letter code: Swarming motility protein SwrC (1052 aa).

Belongs to the resistance-nodulation-cell division (RND) (TC 2.A.6) family.

Required for self-resistance to surfactin, an antimicrobial lipopeptide surfactant produced by B.subtilis. Also required for swarming motility. This Bacillus subtilis (strain 168) protein is Swarming motility protein SwrC (swrC).